The following is a 271-amino-acid chain: HTH-type transcriptional repressor AllR (271 aa).

The 63-residue stretch at 21-83 (AQALERGIAI…SQLGWWHIGL (63 aa)) folds into the HTH iclR-type domain. Positions 43–62 (VSDISLNLDLPLSTTFRLLK) form a DNA-binding region, H-T-H motif. Residues 98–267 (VLSVAGPFMR…ARDISTALGL (170 aa)) form the IclR-ED domain. Residues 154-156 (SGA), D207, C217, and 234-236 (SIS) each bind glyoxylate.

In terms of biological role, negative regulator of allantoin and glyoxylate utilization operons. Binds to the gcl promoter and to the allS-allA intergenic region. This chain is HTH-type transcriptional repressor AllR (allR), found in Escherichia coli (strain UTI89 / UPEC).